The primary structure comprises 423 residues: Carboxypeptidase B2 (423 aa).

Positions 1 to 22 (MKLCSLAVLVPIVLFCEQHVFA) are cleaved as a signal peptide. Residues 23–114 (FQSGQVLAAL…QISNDTVSPR (92 aa)) constitute a propeptide, activation peptide. Asn-44, Asn-73, and Asn-85 each carry an N-linked (GlcNAc...) asparagine glycan. The N-linked (GlcNAc...) (complex) asparagine glycan is linked to Asn-108. Residues 122 to 419 (QYHSLNEIYS…AAVSKIAWHV (298 aa)) enclose the Peptidase M14 domain. An intrachain disulfide couples Cys-178 to Cys-191. Zn(2+) contacts are provided by His-181 and Glu-184. Residues 181–184 (HARE) and Arg-239 each bind substrate. Asn-241 carries N-linked (GlcNAc...) asparagine; partial glycosylation. 2 disulfide bridges follow: Cys-250–Cys-274 and Cys-265–Cys-279. 256 to 257 (NR) contributes to the substrate binding site. Zn(2+) is bound at residue His-310. Residues 311 to 312 (SY) and Tyr-363 contribute to the substrate site. Glu-385 acts as the Proton donor/acceptor in catalysis.

Belongs to the peptidase M14 family. Zn(2+) serves as cofactor. Post-translationally, N-glycosylated. N-glycan at Asn-108: Hex5HexNAc4. As to expression, plasma; synthesized in the liver.

Its subcellular location is the secreted. It catalyses the reaction Release of C-terminal Arg and Lys from a polypeptide.. With respect to regulation, TAFI/CPB2 is unique among carboxypeptidases in that it spontaneously inactivates with a short half-life, a property that is crucial for its role in controlling blood clot lysis. The zymogen is stabilized by interactions with the activation peptide. Release of the activation peptide increases a dynamic flap mobility and in time this leads to conformational changes that disrupt the catalytic site and expose a cryptic thrombin-cleavage site present at Arg-324. In terms of biological role, cleaves C-terminal arginine or lysine residues from biologically active peptides such as kinins or anaphylatoxins in the circulation thereby regulating their activities. Down-regulates fibrinolysis by removing C-terminal lysine residues from fibrin that has already been partially degraded by plasmin. This chain is Carboxypeptidase B2 (CPB2), found in Homo sapiens (Human).